A 354-amino-acid chain; its full sequence is 3-dehydroquinate synthase (354 aa).

NAD(+) contacts are provided by residues 106-110, 130-131, Lys143, and Lys152; these read GVIGD and TS. Zn(2+) is bound by residues Glu185, His246, and His262.

This sequence belongs to the sugar phosphate cyclases superfamily. Dehydroquinate synthase family. Co(2+) is required as a cofactor. It depends on Zn(2+) as a cofactor. NAD(+) serves as cofactor.

The protein resides in the cytoplasm. It catalyses the reaction 7-phospho-2-dehydro-3-deoxy-D-arabino-heptonate = 3-dehydroquinate + phosphate. The protein operates within metabolic intermediate biosynthesis; chorismate biosynthesis; chorismate from D-erythrose 4-phosphate and phosphoenolpyruvate: step 2/7. In terms of biological role, catalyzes the conversion of 3-deoxy-D-arabino-heptulosonate 7-phosphate (DAHP) to dehydroquinate (DHQ). The protein is 3-dehydroquinate synthase of Leuconostoc mesenteroides subsp. mesenteroides (strain ATCC 8293 / DSM 20343 / BCRC 11652 / CCM 1803 / JCM 6124 / NCDO 523 / NBRC 100496 / NCIMB 8023 / NCTC 12954 / NRRL B-1118 / 37Y).